We begin with the raw amino-acid sequence, 447 residues long: Argininosuccinate synthase (447 aa).

ATP contacts are provided by residues 20–28 and alanine 46; that span reads AFSGGLDTS. Tyrosine 102 provides a ligand contact to L-citrulline. Glycine 132 and threonine 134 together coordinate ATP. Threonine 134, asparagine 138, and aspartate 139 together coordinate L-aspartate. Residue asparagine 138 coordinates L-citrulline. Residue aspartate 139 coordinates ATP. Residues arginine 142 and serine 195 each contribute to the L-citrulline site. Residue aspartate 197 participates in ATP binding. Residues threonine 204, glutamate 206, and glutamate 283 each contribute to the L-citrulline site.

This sequence belongs to the argininosuccinate synthase family. Type 2 subfamily. Homotetramer.

It localises to the cytoplasm. It carries out the reaction L-citrulline + L-aspartate + ATP = 2-(N(omega)-L-arginino)succinate + AMP + diphosphate + H(+). The protein operates within amino-acid biosynthesis; L-arginine biosynthesis; L-arginine from L-ornithine and carbamoyl phosphate: step 2/3. This is Argininosuccinate synthase (argG) from Neisseria meningitidis serogroup A / serotype 4A (strain DSM 15465 / Z2491).